A 484-amino-acid polypeptide reads, in one-letter code: Coronin-1B (484 aa).

S2 bears the Phosphoserine mark. WD repeat units lie at residues 80–120, 130–170, 174–213, 217–260, and 265–305; these read GHTG…LTSP, GHTK…ELYR, LHPDLIYNVSWNHNGSLFCTACKDKSVRIIDPRRGTLVAE, AHEG…EPMA, and DSSN…PYIH. The stretch at 447–481 forms a coiled coil; that stretch reads KLEEVMHGLRALRVLVKEQGERISRLEEHLGRMEN.

Belongs to the WD repeat coronin family. Forms homooligomers, but does not form complexes with the other coronins. Interacts with Arp2/3 complex components, including ACTR2, ARPC1B and ARPC2. Binds actin. In terms of processing, phosphorylation on Ser-2 regulates the interaction with the Arp2/3 complex and cell motility in fibroblasts. Phosphorylation does not seem to affect subcellular location.

It localises to the cytoplasm. The protein localises to the cytoskeleton. It is found in the stress fiber. Functionally, regulates leading edge dynamics and cell motility in fibroblasts. May be involved in cytokinesis and signal transduction. The sequence is that of Coronin-1B (Coro1b) from Rattus norvegicus (Rat).